The primary structure comprises 124 residues: Small ribosomal subunit protein uS12 (124 aa).

Positions 8–30 (IRSARQDTEKQTKSPALKSCPQR) are disordered. 3-methylthioaspartic acid is present on Asp-89. A disordered region spans residues 103 to 124 (DTAGVKDRKQSRSKYGAKKPKA). The segment covering 113 to 124 (SRSKYGAKKPKA) has biased composition (basic residues).

Belongs to the universal ribosomal protein uS12 family. Part of the 30S ribosomal subunit. Contacts proteins S8 and S17. May interact with IF1 in the 30S initiation complex.

Its function is as follows. With S4 and S5 plays an important role in translational accuracy. Interacts with and stabilizes bases of the 16S rRNA that are involved in tRNA selection in the A site and with the mRNA backbone. Located at the interface of the 30S and 50S subunits, it traverses the body of the 30S subunit contacting proteins on the other side and probably holding the rRNA structure together. The combined cluster of proteins S8, S12 and S17 appears to hold together the shoulder and platform of the 30S subunit. The sequence is that of Small ribosomal subunit protein uS12 from Trichodesmium erythraeum (strain IMS101).